The following is a 348-amino-acid chain: NADH-ubiquinone oxidoreductase chain 2 (348 aa).

Helical transmembrane passes span 1-21 (MMTL…MFSS), 23-43 (WFFA…MMLF), 56-76 (YFIS…WNYF), 92-112 (ITLI…HFWL), 123-143 (MGLI…IQVS), 148-168 (NMYI…FGGL), 176-196 (LLAY…AVSA), 198-218 (LSWV…TILI), 242-262 (CILV…FLKL), 272-292 (SLIL…FFYL), and 321-341 (LLFN…PFMI).

This sequence belongs to the complex I subunit 2 family.

It localises to the mitochondrion inner membrane. The catalysed reaction is a ubiquinone + NADH + 5 H(+)(in) = a ubiquinol + NAD(+) + 4 H(+)(out). Core subunit of the mitochondrial membrane respiratory chain NADH dehydrogenase (Complex I) that is believed to belong to the minimal assembly required for catalysis. Complex I functions in the transfer of electrons from NADH to the respiratory chain. The immediate electron acceptor for the enzyme is believed to be ubiquinone. This is NADH-ubiquinone oxidoreductase chain 2 (MT-ND2) from Myxine glutinosa (Atlantic hagfish).